A 274-amino-acid polypeptide reads, in one-letter code: 4-diphosphocytidyl-2-C-methyl-D-erythritol kinase (274 aa).

The active site involves K8. 94–104 (PSGAGLGGGSA) serves as a coordination point for ATP. D136 is an active-site residue.

Belongs to the GHMP kinase family. IspE subfamily.

It catalyses the reaction 4-CDP-2-C-methyl-D-erythritol + ATP = 4-CDP-2-C-methyl-D-erythritol 2-phosphate + ADP + H(+). It functions in the pathway isoprenoid biosynthesis; isopentenyl diphosphate biosynthesis via DXP pathway; isopentenyl diphosphate from 1-deoxy-D-xylulose 5-phosphate: step 3/6. Catalyzes the phosphorylation of the position 2 hydroxy group of 4-diphosphocytidyl-2C-methyl-D-erythritol. This Bacteroides fragilis (strain ATCC 25285 / DSM 2151 / CCUG 4856 / JCM 11019 / LMG 10263 / NCTC 9343 / Onslow / VPI 2553 / EN-2) protein is 4-diphosphocytidyl-2-C-methyl-D-erythritol kinase.